The primary structure comprises 130 residues: Small ribosomal subunit protein uS11 (130 aa).

Belongs to the universal ribosomal protein uS11 family. As to quaternary structure, part of the 30S ribosomal subunit. Interacts with proteins S7 and S18. Binds to IF-3.

Its function is as follows. Located on the platform of the 30S subunit, it bridges several disparate RNA helices of the 16S rRNA. Forms part of the Shine-Dalgarno cleft in the 70S ribosome. The sequence is that of Small ribosomal subunit protein uS11 from Kosmotoga olearia (strain ATCC BAA-1733 / DSM 21960 / TBF 19.5.1).